Consider the following 239-residue polypeptide: Ribosomal RNA small subunit methyltransferase G (239 aa).

S-adenosyl-L-methionine contacts are provided by residues Gly-78, Phe-83, Ala-129–Glu-130, and Arg-148.

This sequence belongs to the methyltransferase superfamily. RNA methyltransferase RsmG family.

Its subcellular location is the cytoplasm. Specifically methylates the N7 position of a guanine in 16S rRNA. This Desulfitobacterium hafniense (strain Y51) protein is Ribosomal RNA small subunit methyltransferase G.